Reading from the N-terminus, the 187-residue chain is Elongation factor P (187 aa).

Belongs to the elongation factor P family.

It localises to the cytoplasm. The protein operates within protein biosynthesis; polypeptide chain elongation. In terms of biological role, involved in peptide bond synthesis. Stimulates efficient translation and peptide-bond synthesis on native or reconstituted 70S ribosomes in vitro. Probably functions indirectly by altering the affinity of the ribosome for aminoacyl-tRNA, thus increasing their reactivity as acceptors for peptidyl transferase. The polypeptide is Elongation factor P (Mycoplasmopsis agalactiae (strain NCTC 10123 / CIP 59.7 / PG2) (Mycoplasma agalactiae)).